The following is a 435-amino-acid chain: Monodictyphenone cluster transcription factor (435 aa).

The zn(2)-C6 fungal-type DNA-binding region spans 23 to 50 (CHACALSKLKCSQDKPTCSRCVKRGTAC). Positions 117 to 147 (QYHQRTPSYPESIPSLLSSTGPGTSATSPLT) are disordered. Over residues 130–147 (PSLLSSTGPGTSATSPLT) the composition is skewed to low complexity.

Its subcellular location is the nucleus. Transcription factor that regulates the expression of the gene cluster that mediates the biosynthesis of monodictyphenone, a prenyl xanthone derivative. The protein is Monodictyphenone cluster transcription factor of Emericella nidulans (strain FGSC A4 / ATCC 38163 / CBS 112.46 / NRRL 194 / M139) (Aspergillus nidulans).